Here is a 434-residue protein sequence, read N- to C-terminus: Trigger factor (434 aa).

One can recognise a PPIase FKBP-type domain in the interval 160-245; sequence GDKVKMNFVG…LTEVQAANLP (86 aa).

It belongs to the FKBP-type PPIase family. Tig subfamily.

It is found in the cytoplasm. The enzyme catalyses [protein]-peptidylproline (omega=180) = [protein]-peptidylproline (omega=0). In terms of biological role, involved in protein export. Acts as a chaperone by maintaining the newly synthesized protein in an open conformation. Functions as a peptidyl-prolyl cis-trans isomerase. In Shewanella sp. (strain W3-18-1), this protein is Trigger factor.